Reading from the N-terminus, the 353-residue chain is MSRDIIKLDQIDVTFHQKKRTITAVKDVTIHIQEGDIYGIVGYSGAGKSTLVRVINLLQKPSAGKITIDDDVIFDGKVTLTAEQLRRKRQDIGMIFQHFNLMSQKTAEENVAFALKHSELSKEEKKAKVAKLLDLVGLADRAENYPSQLSGGQKQRVAIARALANDPKILISDESTSALDPKTTKQILALLQDLNQKLGLTVVLITHEMQIVKDIANRVAVMQDGHLIEEGSVLEIFSNPKQPLTQDFISTATGIDEAMVKIEKQEIVEHLSENSLLVQLKYAGASTDEPLLNELYKHYQVMANILYGNIEILDGTPVGELVVVLSGEKAALAGAQEAIRQAGVQLKVLKGVQ.

Residues Leu-8–Ile-249 enclose the ABC transporter domain. Gly-42–Ser-49 provides a ligand contact to ATP.

This sequence belongs to the ABC transporter superfamily. Methionine importer (TC 3.A.1.24) family. In terms of assembly, the complex is composed of two ATP-binding proteins (MetN), two transmembrane proteins (MetI) and a solute-binding protein (MetQ).

It localises to the cell membrane. It carries out the reaction L-methionine(out) + ATP + H2O = L-methionine(in) + ADP + phosphate + H(+). The enzyme catalyses D-methionine(out) + ATP + H2O = D-methionine(in) + ADP + phosphate + H(+). Part of the ABC transporter complex MetNIQ involved in methionine import. Responsible for energy coupling to the transport system. The sequence is that of Methionine import ATP-binding protein MetN from Streptococcus pneumoniae serotype 4 (strain ATCC BAA-334 / TIGR4).